A 284-amino-acid polypeptide reads, in one-letter code: L-ribulose-5-phosphate 3-epimerase UlaE (284 aa).

The protein belongs to the L-ribulose-5-phosphate 3-epimerase family.

The enzyme catalyses L-ribulose 5-phosphate = L-xylulose 5-phosphate. Its pathway is cofactor degradation; L-ascorbate degradation; D-xylulose 5-phosphate from L-ascorbate: step 3/4. Its function is as follows. Catalyzes the isomerization of L-xylulose-5-phosphate to L-ribulose-5-phosphate. Is involved in the anaerobic L-ascorbate utilization. This Escherichia coli O8 (strain IAI1) protein is L-ribulose-5-phosphate 3-epimerase UlaE.